A 252-amino-acid polypeptide reads, in one-letter code: Type IV pilus assembly protein PilF (252 aa).

An N-terminal signal peptide occupies residues 1–17; that stretch reads MTVRAALVFLLAVGLTG. Cysteine 18 is lipidated: N-palmitoyl cysteine. Cysteine 18 is lipidated: S-diacylglycerol cysteine. 6 TPR repeats span residues 32–67, 84–101, 104–133, 139–171, 174–203, and 208–235; these read GRDEARDAYIQLGLGYLQRGNTEQAKVPLRKALEID, EMEPKLADEEYRKALASD, NARVLNNYGGFLYEQKRYEEAYQRLLEASQ, ERSRVFENLGLVSLQMKKPAQAKEYFEKSLRLN, QPSVALEMADLLYKEREYVPARQYYDLFAQ, and NARSLLLGIRLAKVFEDRDTAASYGLQL.

In terms of assembly, interacts with PilQ; this interaction is essential for assemby of PilQ into secretins.

The protein resides in the cell outer membrane. In terms of biological role, essential component of the type IV pilus (T4P) that plays a role in surface and host cell adhesion, colonization, biofilm maturation, virulence, and twitching, a form of surface-associated motility facilitated by cycles of extension, adhesion, and retraction of T4P fibers. Plays an essential role in the outer membrane localization and assembly of PilQ into secretins which are dodecamers of PilQ. The chain is Type IV pilus assembly protein PilF (pilF) from Pseudomonas aeruginosa (strain ATCC 15692 / DSM 22644 / CIP 104116 / JCM 14847 / LMG 12228 / 1C / PRS 101 / PAO1).